The sequence spans 605 residues: Acetyl-coenzyme A carboxylase carboxyl transferase subunits beta/alpha (605 aa).

The tract at residues 1 to 269 is acetyl-coenzyme A carboxylase carboxyl transferase subunit beta; sequence MFKGLFKKTK…QRAEFLLKHG (269 aa). In terms of domain architecture, CoA carboxyltransferase N-terminal spans 40 to 306; it reads LWEKCDSCKS…SRMLDGNDCS (267 aa). The tract at residues 40–570 is carboxyltransferase; that stretch reads LWEKCDSCKS…KNNLLKTLDN (531 aa). 4 residues coordinate Zn(2+): C44, C47, C63, and C66. Residues 44-66 form a C4-type zinc finger; sequence CDSCKSIIYAEDLKKNYHICHEC. The interval 270 to 593 is acetyl-coenzyme A carboxylase carboxyl transferase subunit alpha; it reads FVDKVINRKE…YEKFRSIGRF (324 aa). The region spanning 317-570 is the CoA carboxyltransferase C-terminal domain; the sequence is ASAKSVEEIR…KNNLLKTLDN (254 aa).

The protein in the N-terminal section; belongs to the AccD/PCCB family. It in the C-terminal section; belongs to the AccA family. In terms of assembly, acetyl-CoA carboxylase is a heterotetramer composed of biotin carboxyl carrier protein (AccB), biotin carboxylase (AccC) and two subunits of ACCase subunit beta/alpha. Requires Zn(2+) as cofactor.

It localises to the cytoplasm. The catalysed reaction is N(6)-carboxybiotinyl-L-lysyl-[protein] + acetyl-CoA = N(6)-biotinyl-L-lysyl-[protein] + malonyl-CoA. It functions in the pathway lipid metabolism; malonyl-CoA biosynthesis; malonyl-CoA from acetyl-CoA: step 1/1. Its function is as follows. Component of the acetyl coenzyme A carboxylase (ACC) complex. Biotin carboxylase (BC) catalyzes the carboxylation of biotin on its carrier protein (BCCP) and then the CO(2) group is transferred by the transcarboxylase to acetyl-CoA to form malonyl-CoA. The sequence is that of Acetyl-coenzyme A carboxylase carboxyl transferase subunits beta/alpha (accD) from Natranaerobius thermophilus (strain ATCC BAA-1301 / DSM 18059 / JW/NM-WN-LF).